Reading from the N-terminus, the 175-residue chain is Gamma-crystallin B (175 aa).

2 Beta/gamma crystallin 'Greek key' domains span residues 2–40 (GKIT…RVDS) and 41–83 (GCWM…RLIP). The N-linked (Glc) (glycation) lysine; in vitro glycan is linked to Lys3. Cys19 and Cys23 are joined by a disulfide. The tract at residues 84-88 (QHTGT) is connecting peptide. Beta/gamma crystallin 'Greek key' domains lie at 89-129 (FRMR…NVLE) and 130-172 (GSWV…RRVM).

It belongs to the beta/gamma-crystallin family.

In terms of biological role, crystallins are the dominant structural components of the vertebrate eye lens. The polypeptide is Gamma-crystallin B (CRYGB) (Bos taurus (Bovine)).